The primary structure comprises 672 residues: Ubiquitin carboxyl-terminal hydrolase 19 (672 aa).

The chain crosses the membrane as a helical span at residues 11–31 (NSFTQLILTLFFVSIGLLYFV). Zn(2+)-binding residues include C64, C67, C75, C78, C84, C88, H97, and C101. Residues 64 to 101 (CSVCGKATTKKCSRCKSVRYCSAACQTSDWKSGHKLKC) form an MYND-type zinc finger. The USP domain maps to 174-480 (CGLTNCGNSC…RAYMLLYSRV (307 aa)). The Nucleophile role is filled by C183. Residue H439 is the Proton acceptor of the active site. The interval 484–672 (PSNLRSEESQ…HSDTEMIDAQ (189 aa)) is disordered. Basic and acidic residues predominate over residues 488–499 (RSEESQDEKKTD). Over residues 500–527 (TLNTESNQDGSVESSGVGTNDTSVSSLC) the composition is skewed to polar residues. Composition is skewed to basic and acidic residues over residues 533 to 543 (HSEDPEYEKES) and 553 to 594 (EEGK…KEDP). Positions 606-615 (LDITTPSPSA) are enriched in polar residues. Residues 623-666 (ENERSDTESKPLEKEHSDTESNKPLEKEHLDSESKPLEKEHSDT) show a composition bias toward basic and acidic residues.

It belongs to the peptidase C19 family.

The protein localises to the membrane. It catalyses the reaction Thiol-dependent hydrolysis of ester, thioester, amide, peptide and isopeptide bonds formed by the C-terminal Gly of ubiquitin (a 76-residue protein attached to proteins as an intracellular targeting signal).. Its function is as follows. Recognizes and hydrolyzes the peptide bond at the C-terminal Gly of ubiquitin. Involved in the processing of poly-ubiquitin precursors as well as that of ubiquitinated proteins. This Arabidopsis thaliana (Mouse-ear cress) protein is Ubiquitin carboxyl-terminal hydrolase 19 (UBP19).